We begin with the raw amino-acid sequence, 388 residues long: Dipeptidase verJ (388 aa).

Zn(2+) contacts are provided by His-29, Asp-31, and Glu-142. His-169, Arg-243, and Asp-300 together coordinate substrate.

This sequence belongs to the metallo-dependent hydrolases superfamily. Peptidase M19 family. Zn(2+) serves as cofactor.

The catalysed reaction is an L-aminoacyl-L-amino acid + H2O = 2 an L-alpha-amino acid. It participates in mycotoxin biosynthesis. Functionally, dipeptidase; part of the gene cluster that mediates the biosynthesis of 11'-deoxyverticillin A, one of the dimeric epipolythiodioxopiperazines (ETPs) from the verticillin family that act as mycotoxins. 11'-deoxyverticillin A is required for normal conidiation. The nonribosomal peptide synthetase verP is speculated to be responsible for condensation of amino acids to form the carbon skeleton of verticillin, whereas the cluster-specific tailoring enzymes are involved in further modifications leading to the production of 11'-deoxyverticillin A. In Clonostachys rogersoniana, this protein is Dipeptidase verJ.